Here is a 78-residue protein sequence, read N- to C-terminus: MSRVCQVTGKGPVTGNNISHANNKTRRRFLPNLQHHRFWVESEKRFVRLRVSAKGMRIIDKRGIDVVLAEIRRDGGKV.

The interval 1 to 20 (MSRVCQVTGKGPVTGNNISH) is disordered.

It belongs to the bacterial ribosomal protein bL28 family.

In Pseudomonas fluorescens (strain ATCC BAA-477 / NRRL B-23932 / Pf-5), this protein is Large ribosomal subunit protein bL28.